Here is an 808-residue protein sequence, read N- to C-terminus: Phenylalanine--tRNA ligase beta subunit (808 aa).

Residues 40 to 149 (RPELDFVKIV…DQAEVGKTIR (110 aa)) form the tRNA-binding domain. The B5 domain maps to 407–484 (HKEVRIHTDI…RTKGYDTIQV (78 aa)). D462, D468, E471, and E472 together coordinate Mg(2+). An FDX-ACB domain is found at 716–808 (SQFPEAEIDL…LAGKNGFVLR (93 aa)).

It belongs to the phenylalanyl-tRNA synthetase beta subunit family. Type 1 subfamily. Tetramer of two alpha and two beta subunits. It depends on Mg(2+) as a cofactor.

The protein resides in the cytoplasm. The catalysed reaction is tRNA(Phe) + L-phenylalanine + ATP = L-phenylalanyl-tRNA(Phe) + AMP + diphosphate + H(+). The sequence is that of Phenylalanine--tRNA ligase beta subunit from Leptospira interrogans serogroup Icterohaemorrhagiae serovar Lai (strain 56601).